The primary structure comprises 1823 residues: MAQQQQQQHQQQQHHQQQQQQLQQQQQLLQYNNNSYNLNYNMEDPERRKRREREKYERQQGIQSDDRETSLFGEPRRLNPNEGDPEITAALGDFVDARDYMNASTVGIYRQAPGASNARLQALPKGFGSATTSFSSSSSASASSSASVPGQLPTSQQQQQQQQQQQQQHYQQQQRAPTYLKQADNKPPYNGRGGYPGQPMKNDIPSSSGMAPPRGPPRSSSSSSSSNNNSSSVSNNATAAPTSASTSSPLGPPMSTQMPNGREKSFLGPPAPALPNGGRFVPPSASGKRPSSTAGLQPPPPENHINKIITEMTNNYRVTPLTSIAATPHAPMRENYNLNGPNKFKYAFDAVDPIGPLNSPPAAGASSLMTPLLAPIAPITSPIAPLLTTPPQASQLPLPLPPMAGATTVPPSMAMGAVAPMQQLTPTPPKASPTPPVIKPLKTEKNHSLEKQDSCLENDLELSESDDERKKDSRSAGNSSNSSESDSSESGSEASSKGDPQQQQQQQQQHLLHQQQQHQQQQLLLQQQQQQRLAATANGSKKKYSQTIIASGANTISGLLTSSGLGGTGAGPGGAVNSTGSAAGGVGSGSGSTGGGSSSSGMGTMSSSNSSNKTPSPTDSNRWHLSRFFPKPANQTAAESVSPGVANAMGNVSMKVPGILPGGAQIIPESIDVTTAIVKNEKLHDDSRHMDDDEDEQADQQHQQQQQRYGVGLSVTVKKEQLEQQQQQQQQQQLLLQQQQLTAEQLALAGALPKNQIKRESRLSDSGSGSSGSGSSSSDSAGGSSEVLPMPGPGETLQIPGVPAAITTVMRVPPATQHKAQPNSVTLTPIGPLPASPKPRQKKPRKKKMSAATAPPLDSSDEDEPANSNKKHALELAATAAAAAANAAAASVMPVAAAAAAAAAPAIKKGRGRPRKQAQQQQQQLQLQQQQQQSGNLSSASASSSQAKGPTLTAAKKPLAKGTASSSSSSGTAATVAAGSRKREHSSNSSSNGNTPTKKPNAAMAAAAAAAAAAAAAAIAVRAASSSDEDSSSSSCSSTKSSNSNSSSSGSDTDIPTAAPAVTTAAAVAAAAAQNPAKKRIVKINKVGVASSKAKRRFSLGNSSNSSSSETEEQQQQFLQQQQQQQQQKQQLQQQQQQQPQQQQLQQHHQLQQQQQQQLLQGHFAPELPLQTLKQSAQQRLSSSDCSSSASSDSSSNSSASSSSDEDDAHRSGKRKSDKKKICTLTRIFNPKEGGAKKQGQVVIIDQSEEQLQQQQQQQQQQQQQQQQQQQQQQQQQQQQAKELKPRATPTQLLGATLASPARTTTPHLTSLMCKIDLSKLARQHHHQPERLKTQQNGHLSSRSAEGARTPKELQQIYAPNGYVGGALGGAAGAAAGNKLLGGVKHEHGVKPEPELDAGYEAKYKPNSVKQEFMLKQELPARRRKRSSSSSSSPYKEKKRKKEKAEQLSKELLPVPVLLPANNHERLSRDKLELLLQQQENSANASPNKLQQQNARQLPLSQSQLQHQHQHQHQLQQQQSQSTATGHAIASTTSATVATASTQLPTTCSEAVQTTPPPAAPPPAPRLIYRSHFDNEEEHASDDHRKNDLLLQEAIRRKRAADSERDSFNQMTLYLEAIVYFLLTADAMERCNMEATWTMYKDTLSLIKYISSKNRPYQQLTNGKHESHNIVAILSLRCQSLISLKLYKLRRANCRATIASCSEFFRSGRGDILNGNTPSSISPSNSVGSQGSGSNTPPGKIVPQDIHNQLCKQNEYLTYVNSAHELWDQADRLVRTGNHIDFIRKLDHENGPLTLHSTMHEVFRYVQAGLKTLRDAVSYPQSQ.

The segment covering 1-41 (MAQQQQQQHQQQQHHQQQQQQLQQQQQLLQYNNNSYNLNYN) has biased composition (low complexity). 12 disordered regions span residues 1–87 (MAQQ…DPEI), 126–305 (GFGS…ENHI), 422–544 (QQLT…KKKY), 570–626 (AGPG…WHLS), 686–712 (DSRH…YGVG), 753–1057 (PKNQ…DIPT), 1071–1287 (AAAQ…LKPR), 1322–1350 (ARQH…GART), 1413–1448 (FMLK…AEQL), 1480–1531 (ENSA…AIAS), 1547–1567 (TCSE…APRL), and 1715–1744 (GNTP…IVPQ). Over residues 53–79 (REKYERQQGIQSDDRETSLFGEPRRLN) the composition is skewed to basic and acidic residues. Composition is skewed to low complexity over residues 126–147 (GFGS…SSAS), 156–174 (QQQQ…QQQQ), and 205–249 (PSSS…TSSP). A compositionally biased stretch (pro residues) spans 426-438 (PTPPKASPTPPVI). Thr434 bears the Phosphothreonine mark. The span at 441 to 454 (LKTEKNHSLEKQDS) shows a compositional bias: basic and acidic residues. The segment covering 456–466 (LENDLELSESD) has biased composition (acidic residues). Ser463 and Ser465 each carry phosphoserine. The span at 475–531 (SAGNSSNSSESDSSESGSEASSKGDPQQQQQQQQQHLLHQQQQHQQQQLLLQQQQQQ) shows a compositional bias: low complexity. A compositionally biased stretch (gly residues) spans 582–598 (AAGGVGSGSGSTGGGSS). The segment covering 599–612 (SSGMGTMSSSNSSN) has biased composition (low complexity). The span at 764-785 (SDSGSGSSGSGSSSSDSAGGSS) shows a compositional bias: low complexity. Residues 818-827 (HKAQPNSVTL) are compositionally biased toward polar residues. Positions 839-849 (PRQKKPRKKKM) are enriched in basic residues. Phosphoserine occurs at positions 859 and 860. Composition is skewed to low complexity over residues 877-906 (AATA…AAPA), 917-947 (QAQQ…SSQA), 962-979 (GTAS…VAAG), 1002-1057 (AAMA…DIPT), and 1102-1161 (NSSN…QLLQ). Residues 908–920 (KKGRGRPRKQAQQ) constitute a DNA-binding region (a.T hook). Residues Ser939 and Ser941 each carry the phosphoserine modification. Residues 1172 to 1181 (TLKQSAQQRL) show a composition bias toward polar residues. Composition is skewed to low complexity over residues 1182 to 1203 (SSSD…ASSS) and 1253 to 1280 (QQQQ…QQQQ). Positions 1334 to 1344 (TQQNGHLSSRS) are enriched in polar residues. Over residues 1480-1496 (ENSANASPNKLQQQNAR) the composition is skewed to polar residues. The residue at position 1486 (Ser1486) is a Phosphoserine. A compositionally biased stretch (low complexity) spans 1497 to 1531 (QLPLSQSQLQHQHQHQHQLQQQQSQSTATGHAIAS). Residues 1555–1565 (TPPPAAPPPAP) show a composition bias toward pro residues. Positions 1715–1735 (GNTPSSISPSNSVGSQGSGSN) are enriched in low complexity.

It belongs to the AF4 family.

It is found in the nucleus. Its function is as follows. Has a role in transcriptional regulation. Acts in parallel with the Ras/MAPK and the PI3K/PKB pathways in the control of cell identity and cellular growth. Essential for regulation of the cytoskeleton and cell growth but not for cell proliferation or growth rate. Required specifically for the microtubule-based basal transport of lipid droplets. Plays a partially redundant function downstream of Raf in cell fate specification in the developing eye. Pair-rule protein that regulates embryonic cellularization, gastrulation and segmentation. The sequence is that of AF4/FMR2 family member lilli from Drosophila virilis (Fruit fly).